Consider the following 141-residue polypeptide: Nucleoside triphosphatase NudI (141 aa).

The region spanning 1 to 141 (MRQRTIVCPL…RKTLRLKGLL (141 aa)) is the Nudix hydrolase domain. Residues 38-59 (GGVEPGERIEEALRREIREELG) carry the Nudix box motif.

The protein belongs to the Nudix hydrolase family. NudI subfamily. Monomer. The cofactor is Mg(2+).

It catalyses the reaction a ribonucleoside 5'-triphosphate + H2O = a ribonucleoside 5'-phosphate + diphosphate + H(+). It carries out the reaction a 2'-deoxyribonucleoside 5'-triphosphate + H2O = a 2'-deoxyribonucleoside 5'-phosphate + diphosphate + H(+). The catalysed reaction is dUTP + H2O = dUMP + diphosphate + H(+). The enzyme catalyses dTTP + H2O = dTMP + diphosphate + H(+). It catalyses the reaction dCTP + H2O = dCMP + diphosphate + H(+). In terms of biological role, catalyzes the hydrolysis of nucleoside triphosphates, with a preference for pyrimidine deoxynucleoside triphosphates (dUTP, dTTP and dCTP). The chain is Nucleoside triphosphatase NudI from Escherichia coli O17:K52:H18 (strain UMN026 / ExPEC).